The sequence spans 381 residues: Succinyl-diaminopimelate desuccinylase (381 aa).

Zn(2+) is bound at residue His-69. Asp-71 is a catalytic residue. Zn(2+) is bound at residue Asp-103. Residue Glu-137 is the Proton acceptor of the active site. Zn(2+) is bound by residues Glu-138, Glu-166, and His-355.

This sequence belongs to the peptidase M20A family. DapE subfamily. In terms of assembly, homodimer. The cofactor is Zn(2+). Requires Co(2+) as cofactor.

It catalyses the reaction N-succinyl-(2S,6S)-2,6-diaminopimelate + H2O = (2S,6S)-2,6-diaminopimelate + succinate. It participates in amino-acid biosynthesis; L-lysine biosynthesis via DAP pathway; LL-2,6-diaminopimelate from (S)-tetrahydrodipicolinate (succinylase route): step 3/3. In terms of biological role, catalyzes the hydrolysis of N-succinyl-L,L-diaminopimelic acid (SDAP), forming succinate and LL-2,6-diaminopimelate (DAP), an intermediate involved in the bacterial biosynthesis of lysine and meso-diaminopimelic acid, an essential component of bacterial cell walls. The polypeptide is Succinyl-diaminopimelate desuccinylase (Rickettsia rickettsii (strain Iowa)).